The following is a 689-amino-acid chain: Transketolase (689 aa).

A substrate-binding site is contributed by His-56. Thiamine diphosphate-binding positions include His-96 and 144 to 146 (GNL). Asp-185 provides a ligand contact to Mg(2+). Gly-186 and Asn-215 together coordinate thiamine diphosphate. Residues Asn-215 and Ile-217 each coordinate Mg(2+). Substrate contacts are provided by His-289, Arg-380, and Ser-407. His-289 contacts thiamine diphosphate. Residue Glu-434 is the Proton donor of the active site. Phe-460 lines the thiamine diphosphate pocket. The substrate site is built by His-484, Asp-492, and Arg-543.

The protein belongs to the transketolase family. As to quaternary structure, homodimer. The cofactor is Mg(2+). It depends on Ca(2+) as a cofactor. Mn(2+) serves as cofactor. Requires Co(2+) as cofactor. Thiamine diphosphate is required as a cofactor.

It carries out the reaction D-sedoheptulose 7-phosphate + D-glyceraldehyde 3-phosphate = aldehydo-D-ribose 5-phosphate + D-xylulose 5-phosphate. In terms of biological role, catalyzes the transfer of a two-carbon ketol group from a ketose donor to an aldose acceptor, via a covalent intermediate with the cofactor thiamine pyrophosphate. This chain is Transketolase (tkt), found in Aquifex aeolicus (strain VF5).